The primary structure comprises 430 residues: Dihydroorotase (430 aa).

Zn(2+)-binding residues include histidine 60 and histidine 62. Residues 62–64 (HFR) and asparagine 94 each bind substrate. Zn(2+) is bound by residues aspartate 151, histidine 178, and histidine 231. A substrate-binding site is contributed by asparagine 277. Aspartate 304 contributes to the Zn(2+) binding site. The active site involves aspartate 304. Substrate-binding positions include histidine 308 and 322-323 (FG).

This sequence belongs to the metallo-dependent hydrolases superfamily. DHOase family. Class I DHOase subfamily. Zn(2+) serves as cofactor.

The catalysed reaction is (S)-dihydroorotate + H2O = N-carbamoyl-L-aspartate + H(+). It participates in pyrimidine metabolism; UMP biosynthesis via de novo pathway; (S)-dihydroorotate from bicarbonate: step 3/3. Catalyzes the reversible cyclization of carbamoyl aspartate to dihydroorotate. The sequence is that of Dihydroorotase from Carboxydothermus hydrogenoformans (strain ATCC BAA-161 / DSM 6008 / Z-2901).